The sequence spans 482 residues: E3 ubiquitin-protein ligase makorin-1 (482 aa).

Over residues 26–38 the composition is skewed to low complexity; that stretch reads ASPTPIPTVTAPS. Positions 26-52 are disordered; the sequence is ASPTPIPTVTAPSLGAGGGGGGSDGSG. The segment covering 40 to 52 has biased composition (gly residues); it reads GAGGGGGGSDGSG. 3 C3H1-type zinc fingers span residues 55–82, 84–111, and 208–235; these read WTKQ…HDLS, SPYS…HSKP, and ETKK…HGDS. Positions 236 to 263 are makorin-type Cys-His; sequence CDMCGLQVLHPMDAAQRSQHIKSCIEAH. The RING-type zinc-finger motif lies at 281–335; that stretch reads CGICMEVVYEKANPSERRFGILSNCNHTYCLKCIRKWRSAKQFESKIIKSCPECR. Residues 364-393 form a C3H1-type 4 zinc finger; it reads AMSNKACRYFDEGRGSCPFGGNCFYKHAYP.

Interacts with p53/TP53 and CDKN1A. Interacts with TERT, modulating telomere length homeostasis. Post-translationally, auto-ubiquitinated; which leads to proteasomal degradation. As to expression, ubiquitous.

It catalyses the reaction S-ubiquitinyl-[E2 ubiquitin-conjugating enzyme]-L-cysteine + [acceptor protein]-L-lysine = [E2 ubiquitin-conjugating enzyme]-L-cysteine + N(6)-ubiquitinyl-[acceptor protein]-L-lysine.. It participates in protein modification; protein ubiquitination. Its function is as follows. E3 ubiquitin ligase catalyzing the covalent attachment of ubiquitin moieties onto substrate proteins. These substrates include FILIP1, p53/TP53, CDKN1A and TERT. Keeps cells alive by suppressing p53/TP53 under normal conditions, but stimulates apoptosis by repressing CDKN1A under stress conditions. Acts as a negative regulator of telomerase. Has negative and positive effects on RNA polymerase II-dependent transcription. In Homo sapiens (Human), this protein is E3 ubiquitin-protein ligase makorin-1 (MKRN1).